The chain runs to 98 residues: Integration host factor subunit alpha (98 aa).

The interval 51-71 is disordered; it reads NFDLRDKNERPGRNPKTGEDI. The span at 53 to 69 shows a compositional bias: basic and acidic residues; sequence DLRDKNERPGRNPKTGE.

It belongs to the bacterial histone-like protein family. Heterodimer of an alpha and a beta chain.

Its function is as follows. This protein is one of the two subunits of integration host factor, a specific DNA-binding protein that functions in genetic recombination as well as in transcriptional and translational control. In Vibrio cholerae serotype O1 (strain ATCC 39541 / Classical Ogawa 395 / O395), this protein is Integration host factor subunit alpha.